The sequence spans 451 residues: MNLVVIGVNHKTAPVALRERLAFVGGDIQVAQAQLQQITAGSLIISTCNRTEIYALAPSTQLLANSDAALSKQSDLSLADEPVSTVDLTEQLITWLADFKQVPLEETRPYLYDYVDGQALTHMLRVAAGLDSMILGEPQIFGQIKRSVNQAKEQGFLTNQLNWVVEQIFAAAKRVRNETDVGTQAISLGYAASKLVTQIFDRPEETTFLLIAAGEMNRLVAQNIAGLGVKRILICNRTPERANLLAQELAHLGIQIEVHPLTELDSLLYQADIVSSCSGSMDMLIDKAMTRRALKKRRYKPMLMVDLAVPRDIDSSVGKLDDVYLYSIDDLQHVIAGNLEKRRQAAVEAELLVSHLVVEIERRFQVRKVGQDIHDYRALAAQKAEAVLNEALHELRTSEATAEEVMTELTRRLTQTLVHAPSSLMRRAARDGNNEAIDLIILGLKDAYRKK.

Substrate contacts are provided by residues 47–50 (TCNR), Ser-132, 137–139 (EPQ), and Gln-143. The active-site Nucleophile is Cys-48. 212-217 (AAGEMN) serves as a coordination point for NADP(+).

The protein belongs to the glutamyl-tRNA reductase family. In terms of assembly, homodimer.

It catalyses the reaction (S)-4-amino-5-oxopentanoate + tRNA(Glu) + NADP(+) = L-glutamyl-tRNA(Glu) + NADPH + H(+). It functions in the pathway porphyrin-containing compound metabolism; protoporphyrin-IX biosynthesis; 5-aminolevulinate from L-glutamyl-tRNA(Glu): step 1/2. Its function is as follows. Catalyzes the NADPH-dependent reduction of glutamyl-tRNA(Glu) to glutamate 1-semialdehyde (GSA). The chain is Glutamyl-tRNA reductase from Psychrobacter sp. (strain PRwf-1).